The chain runs to 763 residues: MKNFLPRTLKNIYELYFNNISVHSIVSRNTQLKRSKIIQMTTETFEDIKLEDIPVDDIDFSDLEEQYKVTEEFNFDQYIVVNGAPVIPSAKVPVLKKALTSLFSKAGKVVNMEFPIDEATGKTKGFLFVECGSMNDAKKIIKSFHGKRLDLKHRLFLYTMKDVERYNSDDFDTEFREPDMPTFVPSSSLKSWLMDDKVRDQFVLQDDVKTSVFWNSMFNEEDSLVESRENWSTNYVRFSPKGTYLFSYHQQGVTAWGGPNFDRLRRFYHPDVRNSSVSPNEKYLVTFSTEPIIVEEDNEFSPFTKKNEGHQLCIWDIASGLLMATFPVIKSPYLKWPLVRWSYNDKYCARMVGDSLIVHDATKNFMPLEAKALKPSGIRDFSFAPEGVKLQPFRNGDEPSVLLAYWTPETNNSACTATIAEVPRGRVLKTVNLVQVSNVTLHWQNQAEFLCFNVERHTKSGKTQFSNLQICRLTERDIPVEKVELKDSVFEFGWEPHGNRFVTISVHEVADMNYAIPANTIRFYAPETKEKTDVIKRWSLVKEIPKTFANTVSWSPAGRFVVVGALVGPNMRRSDLQFYDMDYPGEKNINDNNDVSASLKDVAHPTYSAATNITWDPSGRYVTAWSSSLKHKVEHGYKIFNIAGNLVKEDIIAGFKNFAWRPRPASILSNAERKKVRKNLREWSAQFEEQDAMEADTAMRDLILHQRELLKQWTEYREKIGQEMEKSMNFKIFDVQPEDASDDFTTIEEIVEEVLEETKEKVE.

The interval 1–136 is sufficient for interaction with HCR1 and TIF32; that stretch reads MKNFLPRTLK…LFVECGSMND (136 aa). The segment at 28 to 261 is sufficient for interaction with PIC8; sequence RNTQLKRSKI…GVTAWGGPNF (234 aa). Position 61 is a phosphoserine (serine 61). Position 67 is a phosphotyrosine (tyrosine 67). The 86-residue stretch at 77–162 folds into the RRM domain; it reads QYIVVNGAPV…HRLFLYTMKD (86 aa). WD repeat units follow at residues 228–266, 277–325, 373–416, 484–524, 544–589, and 605–650; these read RENW…RLRR, VSPN…LMAT, LKPS…SACT, ELKD…IRFY, IPKT…EKNI, and PTYS…VKED. A Phosphoserine modification is found at serine 669.

Belongs to the eIF-3 subunit B family. In terms of assembly, the eukaryotic translation initiation factor 3 (eIF-3) core complex is composed of TIF32, PRT1, NIP1, TIF34 and TIF35. A subcomplex of TIF32, NIP1 and PRT1 mediates the interaction with eIF-1, TIF5/eIF-5 and HCR1. The factors eIF-1, eIF-2, eIF-3, TIF5/eIF-5 and methionyl-tRNAi form a multifactor complex (MFC) that may bind to the 40S ribosome.

The protein resides in the cytoplasm. In terms of biological role, RNA-binding component of the eukaryotic translation initiation factor 3 (eIF-3) complex, which is involved in protein synthesis of a specialized repertoire of mRNAs and, together with other initiation factors, stimulates binding of mRNA and methionyl-tRNAi to the 40S ribosome. The eIF-3 complex specifically targets and initiates translation of a subset of mRNAs involved in cell proliferation. In Saccharomyces cerevisiae (strain ATCC 204508 / S288c) (Baker's yeast), this protein is Eukaryotic translation initiation factor 3 subunit B.